A 429-amino-acid chain; its full sequence is Probable M18 family aminopeptidase 2 (429 aa).

Residues H82, H156, and H401 each coordinate Zn(2+).

The protein belongs to the peptidase M18 family. Requires Zn(2+) as cofactor.

This chain is Probable M18 family aminopeptidase 2, found in Pseudomonas syringae pv. syringae (strain B728a).